Consider the following 218-residue polypeptide: Ropporin-1-like protein (218 aa).

Residues 17-54 (PELPDILKQFTKAAIRTQPADVLQWSAGYFSALSRGDP) form the RIIa domain.

The protein belongs to the ropporin family. As to quaternary structure, component of the axonemal radial spoke complex 1 (RS1), at least composed of spoke head proteins RSPH1, RSPH3, RSPH9 and the cilia-specific component RSPH4A or sperm-specific component RSPH6A, spoke stalk proteins RSPH14, DNAJB13, DYDC1, ROPN1L and NME5, and the anchor protein IQUB. May interact with AKAP3. Interacts with FSCB; the interaction increases upon spermatozoa capacitation conditions. Interacts with CFAP61. In terms of processing, sumoylated, sumoylation decreases upon spermatozoa capacitation conditions. In terms of tissue distribution, testis-specific. Expression is restricted to germ cells.

The protein resides in the cell projection. Its subcellular location is the cilium. It localises to the flagellum. In terms of biological role, functions as part of axonemal radial spoke complexes that play an important part in the motility of sperm and cilia. Important for male fertility. With ROPN1, involved in fibrous sheath integrity and sperm motility, plays a role in PKA-dependent signaling processes required for spermatozoa capacitation. This chain is Ropporin-1-like protein (Ropn1l), found in Mus musculus (Mouse).